A 445-amino-acid chain; its full sequence is Glutamate-1-semialdehyde 2,1-aminomutase (445 aa).

K281 carries the N6-(pyridoxal phosphate)lysine modification.

The protein belongs to the class-III pyridoxal-phosphate-dependent aminotransferase family. HemL subfamily. Homodimer. Pyridoxal 5'-phosphate is required as a cofactor.

Its subcellular location is the cytoplasm. The enzyme catalyses (S)-4-amino-5-oxopentanoate = 5-aminolevulinate. The protein operates within porphyrin-containing compound metabolism; protoporphyrin-IX biosynthesis; 5-aminolevulinate from L-glutamyl-tRNA(Glu): step 2/2. This is Glutamate-1-semialdehyde 2,1-aminomutase from Nocardioides sp. (strain ATCC BAA-499 / JS614).